The primary structure comprises 215 residues: Adenylate kinase (215 aa).

10–15 (GAGKGT) provides a ligand contact to ATP. The segment at 30–59 (STGDMLRAAVKAETELGLKAKSVMDSGGLV) is NMP. Residues Thr-31, Arg-36, 57-59 (GLV), 85-88 (GFPR), and Gln-92 each bind AMP. The LID stretch occupies residues 122–159 (GRRVHEGSGRIYHTIFNPPKVEGIDDVTGEPLLQRKDD). ATP is bound by residues Arg-123 and 132-133 (IY). Positions 156 and 167 each coordinate AMP. ATP is bound at residue Gly-201.

The protein belongs to the adenylate kinase family. As to quaternary structure, monomer.

It is found in the cytoplasm. It carries out the reaction AMP + ATP = 2 ADP. Its pathway is purine metabolism; AMP biosynthesis via salvage pathway; AMP from ADP: step 1/1. Functionally, catalyzes the reversible transfer of the terminal phosphate group between ATP and AMP. Plays an important role in cellular energy homeostasis and in adenine nucleotide metabolism. The protein is Adenylate kinase of Pseudomonas syringae pv. syringae (strain B728a).